Consider the following 266-residue polypeptide: GFP-like fluorescent chromoprotein cFP484 (266 aa).

Residues 104–106 (QYG) constitute a cross-link (2-iminomethyl-5-imidazolinone (Gln-Gly)). 2,3-didehydrotyrosine is present on Y105.

It belongs to the GFP family. Contains a chromophore consisting of modified amino acid residues. The chromophore is formed by autocatalytic backbone condensation between Xaa-N and Gly-(N+2), oxidation of Tyr-(N+1) to didehydrotyrosine, and formation of a double bond to the alpha-amino nitrogen of residue Xaa-N. Maturation of the chromophore requires nothing other than molecular oxygen. The precise stereochemistry of the tyrosine has not been determined. As to expression, tentacle and oral disk.

Functionally, pigment protein that is green in color. In Clavularia sp. (Brown star polyp), this protein is GFP-like fluorescent chromoprotein cFP484.